The sequence spans 121 residues: Large ribosomal subunit protein bL20 (121 aa).

Belongs to the bacterial ribosomal protein bL20 family.

In terms of biological role, binds directly to 23S ribosomal RNA and is necessary for the in vitro assembly process of the 50S ribosomal subunit. It is not involved in the protein synthesizing functions of that subunit. The protein is Large ribosomal subunit protein bL20 of Sphingopyxis alaskensis (strain DSM 13593 / LMG 18877 / RB2256) (Sphingomonas alaskensis).